The following is a 228-amino-acid chain: Ribonuclease 3 (228 aa).

The region spanning Leu7–Gly132 is the RNase III domain. Mg(2+) is bound at residue Glu45. The active site involves Asp49. Residues Asp118 and Glu121 each contribute to the Mg(2+) site. The active site involves Glu121. Positions Asp157–Arg226 constitute a DRBM domain.

This sequence belongs to the ribonuclease III family. In terms of assembly, homodimer. Mg(2+) is required as a cofactor.

It localises to the cytoplasm. The catalysed reaction is Endonucleolytic cleavage to 5'-phosphomonoester.. Digests double-stranded RNA. Involved in the processing of ribosomal RNA precursors and of some mRNAs. Complements an E.coli disruption mutant, but the E.coli enzyme does not cleave R.capsulatus rRNA precursor, showing substrate recognition is different. Probably also processes some mRNAs, and tRNAs when they are encoded in the rRNA operon. Probably processes pre-crRNA and tracrRNA of type II CRISPR loci if present in the organism. This is Ribonuclease 3 (rnc) from Rhodobacter capsulatus (Rhodopseudomonas capsulata).